The chain runs to 109 residues: uncharacterized protein (109 aa).

It to M.jannaschii MJ1244 and MJ1245 and M.thermoautotrophicum MTH1110.

This is an uncharacterized protein from Methanococcus maripaludis (Methanococcus deltae).